Reading from the N-terminus, the 125-residue chain is Photoactive yellow protein (125 aa).

The PAS domain maps to isoleucine 23–glycine 86. At cysteine 69 the chain carries S-(4-hydroxycinnamyl)cysteine.

Belongs to the photoactive yellow protein family. The 4-hydroxycinnamic acid (p-coumaric acid) chromophore is covalently bound via a thioester linkage.

Its function is as follows. This photoactive protein is a photoreceptor with kinetics similar to that of rhodopsin. The protein is Photoactive yellow protein (pyp) of Rhodothalassium salexigens (Rhodospirillum salexigens).